The primary structure comprises 364 residues: Pyrimidine monooxygenase RutA (364 aa).

FMN contacts are provided by residues 49–50, Asn-115, Glu-124, 140–141, and Ser-190; these read IK and RY.

Belongs to the NtaA/SnaA/DszA monooxygenase family. RutA subfamily.

The enzyme catalyses uracil + FMNH2 + NADH + O2 = (Z)-3-ureidoacrylate + FMN + NAD(+) + H2O + H(+). The catalysed reaction is thymine + FMNH2 + NADH + O2 = (Z)-2-methylureidoacrylate + FMN + NAD(+) + H2O + H(+). Functionally, catalyzes the pyrimidine ring opening between N-3 and C-4 by an unusual flavin hydroperoxide-catalyzed mechanism, adding oxygen atoms in the process to yield ureidoacrylate peracid, that immediately reacts with FMN forming ureidoacrylate and FMN-N(5)-oxide. The FMN-N(5)-oxide reacts spontaneously with NADH to produce FMN. Requires the flavin reductase RutF to regenerate FMN in vivo. This chain is Pyrimidine monooxygenase RutA, found in Methylorubrum extorquens (strain ATCC 14718 / DSM 1338 / JCM 2805 / NCIMB 9133 / AM1) (Methylobacterium extorquens).